The primary structure comprises 354 residues: Uroporphyrinogen decarboxylase (354 aa).

Substrate-binding positions include 27 to 31 (RQAGR), Asp-77, Tyr-154, Ser-209, and His-327.

It belongs to the uroporphyrinogen decarboxylase family. Homodimer.

The protein resides in the cytoplasm. The enzyme catalyses uroporphyrinogen III + 4 H(+) = coproporphyrinogen III + 4 CO2. It participates in porphyrin-containing compound metabolism; protoporphyrin-IX biosynthesis; coproporphyrinogen-III from 5-aminolevulinate: step 4/4. Functionally, catalyzes the decarboxylation of four acetate groups of uroporphyrinogen-III to yield coproporphyrinogen-III. In Shewanella sp. (strain ANA-3), this protein is Uroporphyrinogen decarboxylase.